A 546-amino-acid chain; its full sequence is uncharacterized protein (546 aa).

Helical transmembrane passes span 106–126, 145–165, 172–192, 231–251, 263–283, 332–352, 375–395, 416–436, 444–464, and 510–530; these read WWIVIQVSVITIVVTFASSVY, TLGSCTFLVGFGVGSLPFAPL, FIIYFVTLLIFTIFQVGGGCA, YVLPGFCTFPYLGPIIGPIIG, WTFWINMIWAAAVIVFVFIFF, LIFTEPIVVCFTLYLTVVYII, GLSFIGVGVGIVCAGLCTPFI, LYPLFIGCFLLPISMFWFAWT, WIVPIIASAFFGFSLLIVFFV, and WATSVLGFISVAMVPIPFIFY.

It belongs to the major facilitator superfamily. CAR1 family.

Its subcellular location is the endoplasmic reticulum membrane. This is an uncharacterized protein from Schizosaccharomyces pombe (strain 972 / ATCC 24843) (Fission yeast).